Here is a 187-residue protein sequence, read N- to C-terminus: Probable nicotinate-nucleotide adenylyltransferase (187 aa).

The protein belongs to the NadD family.

It carries out the reaction nicotinate beta-D-ribonucleotide + ATP + H(+) = deamido-NAD(+) + diphosphate. The protein operates within cofactor biosynthesis; NAD(+) biosynthesis; deamido-NAD(+) from nicotinate D-ribonucleotide: step 1/1. Catalyzes the reversible adenylation of nicotinate mononucleotide (NaMN) to nicotinic acid adenine dinucleotide (NaAD). The chain is Probable nicotinate-nucleotide adenylyltransferase from Anaeromyxobacter dehalogenans (strain 2CP-1 / ATCC BAA-258).